A 285-amino-acid chain; its full sequence is Formate channel FocA (285 aa).

Residues 1-30 lie on the Cytoplasmic side of the membrane; it reads MKADNPFDLLLPAAMAKVAEEAGVYKATKH. A helical transmembrane segment spans residues 31–56; that stretch reads PLKTFYLAITAGVFISIAFVFYITAT. Residues 57–64 are Periplasmic-facing; the sequence is TGTGTMPF. The chain crosses the membrane as a helical span at residues 65–85; it reads GMAKLVGGICFSLGLILCVVC. Residues 86-112 lie on the Cytoplasmic side of the membrane; it reads GADLFTSTVLIVVAKASGRITWGQLAK. A helical transmembrane segment spans residues 113–135; the sequence is NWLNVYFGNLVGALLFVLLMWLS. Residues 136-160 lie on the Periplasmic side of the membrane; that stretch reads GEYMTANGQWGLNVLQTADHKVHHT. Residues 161–181 traverse the membrane as a helical segment; sequence FIEAVCLGILANLMVCLAVWM. Residues 182-187 lie on the Cytoplasmic side of the membrane; sequence SYSGRS. The helical transmembrane segment at 188–205 threads the bilayer; sequence LMDKAFIMVLPVAMFVAS. The Periplasmic portion of the chain corresponds to 206–249; that stretch reads GFEHSIANMFMIPMGIVIRDFASPEFWTAVGSAPENFSHLTVMN. The chain crosses the membrane as a helical span at residues 250-276; it reads FITDNLIPVTIGNIIGGGLLVGLTYWV. At 277-285 the chain is on the cytoplasmic side; the sequence is IYLRENDHH.

It belongs to the FNT transporter (TC 1.A.16) family. As to quaternary structure, homopentamer.

Its subcellular location is the cell inner membrane. The enzyme catalyses formate(in) = formate(out). In terms of biological role, involved in the bidirectional transport of formate during mixed-acid fermentation. Functions to maintain relatively constant intracellular formate levels during growth, using different mechanisms for efflux and uptake of the anion. Is impermeable to water. This Escherichia coli O157:H7 protein is Formate channel FocA.